We begin with the raw amino-acid sequence, 200 residues long: 3-isopropylmalate dehydratase small subunit (200 aa).

The protein belongs to the LeuD family. LeuD type 1 subfamily. As to quaternary structure, heterodimer of LeuC and LeuD.

It carries out the reaction (2R,3S)-3-isopropylmalate = (2S)-2-isopropylmalate. It participates in amino-acid biosynthesis; L-leucine biosynthesis; L-leucine from 3-methyl-2-oxobutanoate: step 2/4. In terms of biological role, catalyzes the isomerization between 2-isopropylmalate and 3-isopropylmalate, via the formation of 2-isopropylmaleate. The chain is 3-isopropylmalate dehydratase small subunit from Yersinia pestis bv. Antiqua (strain Antiqua).